A 365-amino-acid chain; its full sequence is DNA replication and repair protein RecF (365 aa).

30 to 37 (GANGQGKT) contributes to the ATP binding site.

This sequence belongs to the RecF family.

It is found in the cytoplasm. The RecF protein is involved in DNA metabolism; it is required for DNA replication and normal SOS inducibility. RecF binds preferentially to single-stranded, linear DNA. It also seems to bind ATP. This is DNA replication and repair protein RecF from Geobacter metallireducens (strain ATCC 53774 / DSM 7210 / GS-15).